A 74-amino-acid polypeptide reads, in one-letter code: Metallothionein-like protein type 2 (74 aa).

This sequence belongs to the metallothionein superfamily. Type 15 family.

Its function is as follows. Metallothioneins have a high content of cysteine residues that bind various heavy metals. This is Metallothionein-like protein type 2 from Nicotiana plumbaginifolia (Leadwort-leaved tobacco).